A 227-amino-acid polypeptide reads, in one-letter code: Cytochrome c oxidase subunit 2 (227 aa).

Topologically, residues 1–14 are mitochondrial intermembrane; that stretch reads MAYPFQLGLQDATS. A helical membrane pass occupies residues 15-45; the sequence is PIMEELLHFHDHTLMIVFLISSLVLYIISLM. Over 46-59 the chain is Mitochondrial matrix; it reads LTTKLTHTSTMDAQ. The helical transmembrane segment at 60–87 threads the bilayer; that stretch reads EVETVWTILPAIILILIALPSLRILYMM. The Mitochondrial intermembrane portion of the chain corresponds to 88–227; that stretch reads DEINNPSLTV…YFETWSAVMV (140 aa). Positions 161, 196, 198, 200, 204, and 207 each coordinate Cu cation. Glu198 provides a ligand contact to Mg(2+). The residue at position 218 (Tyr218) is a Phosphotyrosine.

Belongs to the cytochrome c oxidase subunit 2 family. Component of the cytochrome c oxidase (complex IV, CIV), a multisubunit enzyme composed of 14 subunits. The complex is composed of a catalytic core of 3 subunits MT-CO1, MT-CO2 and MT-CO3, encoded in the mitochondrial DNA, and 11 supernumerary subunits COX4I, COX5A, COX5B, COX6A, COX6B, COX6C, COX7A, COX7B, COX7C, COX8 and NDUFA4, which are encoded in the nuclear genome. The complex exists as a monomer or a dimer and forms supercomplexes (SCs) in the inner mitochondrial membrane with NADH-ubiquinone oxidoreductase (complex I, CI) and ubiquinol-cytochrome c oxidoreductase (cytochrome b-c1 complex, complex III, CIII), resulting in different assemblies (supercomplex SCI(1)III(2)IV(1) and megacomplex MCI(2)III(2)IV(2)). Found in a complex with TMEM177, COA6, COX18, COX20, SCO1 and SCO2. Interacts with TMEM177 in a COX20-dependent manner. Interacts with COX20. Interacts with COX16. It depends on Cu cation as a cofactor.

It is found in the mitochondrion inner membrane. The catalysed reaction is 4 Fe(II)-[cytochrome c] + O2 + 8 H(+)(in) = 4 Fe(III)-[cytochrome c] + 2 H2O + 4 H(+)(out). Functionally, component of the cytochrome c oxidase, the last enzyme in the mitochondrial electron transport chain which drives oxidative phosphorylation. The respiratory chain contains 3 multisubunit complexes succinate dehydrogenase (complex II, CII), ubiquinol-cytochrome c oxidoreductase (cytochrome b-c1 complex, complex III, CIII) and cytochrome c oxidase (complex IV, CIV), that cooperate to transfer electrons derived from NADH and succinate to molecular oxygen, creating an electrochemical gradient over the inner membrane that drives transmembrane transport and the ATP synthase. Cytochrome c oxidase is the component of the respiratory chain that catalyzes the reduction of oxygen to water. Electrons originating from reduced cytochrome c in the intermembrane space (IMS) are transferred via the dinuclear copper A center (CU(A)) of subunit 2 and heme A of subunit 1 to the active site in subunit 1, a binuclear center (BNC) formed by heme A3 and copper B (CU(B)). The BNC reduces molecular oxygen to 2 water molecules using 4 electrons from cytochrome c in the IMS and 4 protons from the mitochondrial matrix. The sequence is that of Cytochrome c oxidase subunit 2 (MT-CO2) from Lycalopex sechurae (Sechuran desert fox).